Reading from the N-terminus, the 660-residue chain is MATSHRVAKLVASSLQTPVNPITGARVAQYEREDPLKALAAAEAILEDEEEEKVAQPAGASADLNTSFSGVDEHAPISYEDFVNFPDIHHSNEEYFKKVEELKAAHIETMAKLEKMYQDKLHLKEVQPVVIREDSLSDSSRSVSEKNSYHPVSLMTSFSEPDLGQSSSLYVSSSEEELPNLEKEYPRKNRMMTYAKELINNMWTDFCVEDYIRCKDTGFHAAEKRRKKRKEWVPTITVPEPFQMMIREQKKKEESMKSKSDIEMVHKALKKQEEDPEYKKKFRANPVPASVFLPLYHDLVKQKEERRRSLKEKSKEALLASQKPFKFIAREEQKRAAREKQLRDFLKYKKKTNRFKARPIPRSTYGSTTNDKLKEEELYRNLRTQLRAQEHLQNSSPLPCRSACGCRNPRCPEQAVKLKCKHKVRCPTPDFEDLPERYQKHLSEHKSPKLLTVCKPFDLHASPHASIKREKILADIEADEENLKETRWPYLSPRRKSPVRCAGVNPVPCNCNPPVPTVSSRGREQAVRKSEKERMREYQRELEEREEKLKKRPLLFERVAQKNARMAAEKHYSNTLKALGISDEFVSKKGQSGKVLEYFNNQETKSVTEDKESFNEEEKIEERENGEENYFIDTNSQDSYKEKDEANEESEEEKSVEESH.

2 coiled-coil regions span residues 93–120 and 296–320; these read EEYF…YQDK and YHDL…ALLA. The segment at 341 to 525 is required for interaction with CFAP418; that stretch reads QLRDFLKYKK…PTVSSRGREQ (185 aa). Glycyl lysine isopeptide (Lys-Gly) (interchain with G-Cter in SUMO2) cross-links involve residues lysine 468 and lysine 484. Residues 522 to 552 adopt a coiled-coil conformation; the sequence is GREQAVRKSEKERMREYQRELEEREEKLKKR. A disordered region spans residues 605–660; sequence KSVTEDKESFNEEEKIEERENGEENYFIDTNSQDSYKEKDEANEESEEEKSVEESH. The span at 606–623 shows a compositional bias: basic and acidic residues; it reads SVTEDKESFNEEEKIEER. Over residues 645–660 the composition is skewed to acidic residues; it reads EANEESEEEKSVEESH.

The protein belongs to the FAM161 family. Interacts (via central region) with CFAP418 (via N-terminus); the interaction is direct. Interacts (via C-terminus) with microtubules. Interacts with LCA5. Interacts with CEP290. Interacts with SDCCAG8. Interacts with FAM161B. Interacts with POC1B. Interacts with CEP78. Forms a microtubule-associated complex with POC5, CETN2 and POC1B. Interacts with CCDC15. In terms of tissue distribution, isoform 1 and isoform 3 are widely expressed with highest levels in retina and testis, with isoform 1 being the most abundant in all tissues tested.

It localises to the cytoplasm. The protein resides in the cytoskeleton. Its subcellular location is the cilium basal body. The protein localises to the cell projection. It is found in the cilium. It localises to the microtubule organizing center. The protein resides in the centrosome. Its subcellular location is the centriole. Functionally, involved in ciliogenesis. The chain is Protein FAM161A (FAM161A) from Homo sapiens (Human).